The primary structure comprises 545 residues: Capsular polysaccharide phosphotransferase SacB (545 aa).

Belongs to the stealth family.

In terms of biological role, may be the polymerase that links individual UDP-N-acetyl-D-mannosamine monomers. In serotype A the capsule is composed of repeated units of (alpha 1-6)-linked N-acetyl-D-mannosamine-1-phosphate. The polypeptide is Capsular polysaccharide phosphotransferase SacB (sacB) (Neisseria meningitidis serogroup A).